The following is a 290-amino-acid chain: UPF0750 membrane protein YpjC (290 aa).

Helical transmembrane passes span 9–29 (NIFFILIGAAIFSFGLVHFNM), 47–67 (ALFHISPSISNLVLNIPIFFI), 75–95 (TMFVYTLVGTVALSLFLSIFQ), 106–126 (DLALAALFAGVFIGAGLGIIF), 146–166 (FGIPMGRTMFAFDACVIILSL), and 179–199 (LVAVFVAARLIDFIQEGGYAA).

This sequence belongs to the UPF0750 family.

The protein resides in the cell membrane. In Bacillus subtilis (strain 168), this protein is UPF0750 membrane protein YpjC (ypjC).